Consider the following 248-residue polypeptide: Phosphoribosylaminoimidazole-succinocarboxamide synthase (248 aa).

This sequence belongs to the SAICAR synthetase family.

The enzyme catalyses 5-amino-1-(5-phospho-D-ribosyl)imidazole-4-carboxylate + L-aspartate + ATP = (2S)-2-[5-amino-1-(5-phospho-beta-D-ribosyl)imidazole-4-carboxamido]succinate + ADP + phosphate + 2 H(+). It participates in purine metabolism; IMP biosynthesis via de novo pathway; 5-amino-1-(5-phospho-D-ribosyl)imidazole-4-carboxamide from 5-amino-1-(5-phospho-D-ribosyl)imidazole-4-carboxylate: step 1/2. The polypeptide is Phosphoribosylaminoimidazole-succinocarboxamide synthase (purC) (Methanothermobacter thermautotrophicus (strain ATCC 29096 / DSM 1053 / JCM 10044 / NBRC 100330 / Delta H) (Methanobacterium thermoautotrophicum)).